The sequence spans 105 residues: Cell division protein FtsL (105 aa).

The Cytoplasmic segment spans residues 1–24 (MAEKMEKTGQILQMQLKRFSRVEK). Residues 25–45 (AFYFSIAVTTLIVAISIIFMQ) traverse the membrane as a helical segment. The Extracellular portion of the chain corresponds to 46–105 (TKLLQVQNDLTKINAQIEEKKTELDDAKQEVNELLRAERLKEIANSHDLQLNNENIRIAE).

This sequence belongs to the FtsL family.

The protein resides in the cell membrane. Its function is as follows. Essential cell division protein. The chain is Cell division protein FtsL from Streptococcus pneumoniae (strain ATCC BAA-255 / R6).